We begin with the raw amino-acid sequence, 347 residues long: Ribosomal RNA small subunit methyltransferase H (347 aa).

S-adenosyl-L-methionine is bound by residues 50 to 52 (GGH), aspartate 69, phenylalanine 96, aspartate 125, and glutamine 132.

This sequence belongs to the methyltransferase superfamily. RsmH family.

The protein resides in the cytoplasm. The catalysed reaction is cytidine(1402) in 16S rRNA + S-adenosyl-L-methionine = N(4)-methylcytidine(1402) in 16S rRNA + S-adenosyl-L-homocysteine + H(+). Functionally, specifically methylates the N4 position of cytidine in position 1402 (C1402) of 16S rRNA. The protein is Ribosomal RNA small subunit methyltransferase H of Corynebacterium aurimucosum (strain ATCC 700975 / DSM 44827 / CIP 107346 / CN-1) (Corynebacterium nigricans).